Consider the following 443-residue polypeptide: Proline--tRNA ligase (443 aa).

Belongs to the class-II aminoacyl-tRNA synthetase family. ProS type 2 subfamily. Homodimer.

It is found in the cytoplasm. The catalysed reaction is tRNA(Pro) + L-proline + ATP = L-prolyl-tRNA(Pro) + AMP + diphosphate. In terms of biological role, catalyzes the attachment of proline to tRNA(Pro) in a two-step reaction: proline is first activated by ATP to form Pro-AMP and then transferred to the acceptor end of tRNA(Pro). The polypeptide is Proline--tRNA ligase (Zymomonas mobilis subsp. mobilis (strain ATCC 31821 / ZM4 / CP4)).